Reading from the N-terminus, the 202-residue chain is Elongation factor Ts, chloroplastic (202 aa).

It belongs to the EF-Ts family.

Its subcellular location is the plastid. It localises to the chloroplast. Functionally, associates with the EF-Tu.GDP complex and induces the exchange of GDP to GTP. It remains bound to the aminoacyl-tRNA.EF-Tu.GTP complex up to the GTP hydrolysis stage on the ribosome. The polypeptide is Elongation factor Ts, chloroplastic (tsf) (Phaeodactylum tricornutum (strain CCAP 1055/1)).